We begin with the raw amino-acid sequence, 372 residues long: Cytochrome b (372 aa).

The next 4 membrane-spanning stretches (helical) occupy residues 25-45 (FGSMLLTCLMLQITTGFFLAI), 69-90 (WIMQNLHAISASMFFICIYIHI), 105-125 (WLSGTALLITLMATAFFGYVL), and 170-190 (FFALHFILPFAIMALSSIHII). The heme b site is built by His-75 and His-89. His-174 and His-188 together coordinate heme b. His-193 contributes to the a ubiquinone binding site. 4 consecutive transmembrane segments (helical) span residues 218–238 (YKDMLMFTSMITLLFITLSFS), 280–300 (LGGALALLMSVMILTTVPFTH), 312–332 (LSQILFWTLMATFITITWTAS), and 339–358 (FISISQTTSIFYFSFFITIP).

The protein belongs to the cytochrome b family. As to quaternary structure, the cytochrome bc1 complex contains 3 respiratory subunits (MT-CYB, CYC1 and UQCRFS1), 2 core proteins (UQCRC1 and UQCRC2) and probably 6 low-molecular weight proteins. Heme b serves as cofactor.

The protein localises to the mitochondrion inner membrane. Component of the ubiquinol-cytochrome c reductase complex (complex III or cytochrome b-c1 complex) that is part of the mitochondrial respiratory chain. The b-c1 complex mediates electron transfer from ubiquinol to cytochrome c. Contributes to the generation of a proton gradient across the mitochondrial membrane that is then used for ATP synthesis. This chain is Cytochrome b (MT-CYB), found in Naja annulata annulata (Banded water cobra).